A 302-amino-acid chain; its full sequence is Glutaminase (302 aa).

Substrate-binding residues include S61, N111, E155, N162, Y186, Y238, and V256.

Belongs to the glutaminase family. As to quaternary structure, homotetramer.

The catalysed reaction is L-glutamine + H2O = L-glutamate + NH4(+). The sequence is that of Glutaminase from Pseudomonas fluorescens (strain ATCC BAA-477 / NRRL B-23932 / Pf-5).